A 903-amino-acid polypeptide reads, in one-letter code: Dual serine/threonine and tyrosine protein kinase (903 aa).

Positions 382-414 form a coiled coil; that stretch reads ANRKQEEMKEMIVETLESMKEQLLEDAANLEFT. Residues 627 to 881 enclose the Protein kinase domain; that stretch reads PKLGRELGRG…PLLGIVQPSL (255 aa). Residues 633 to 641 and Lys-656 each bind ATP; that span reads LGRGQYGVV. The Proton acceptor role is filled by Asp-752.

The protein belongs to the protein kinase superfamily. Ser/Thr protein kinase family.

The protein resides in the cytoplasm. The protein localises to the cell membrane. It localises to the apical cell membrane. Its subcellular location is the basolateral cell membrane. It is found in the cell junction. It catalyses the reaction L-seryl-[protein] + ATP = O-phospho-L-seryl-[protein] + ADP + H(+). The catalysed reaction is L-threonyl-[protein] + ATP = O-phospho-L-threonyl-[protein] + ADP + H(+). The enzyme catalyses L-tyrosyl-[protein] + ATP = O-phospho-L-tyrosyl-[protein] + ADP + H(+). In terms of biological role, may act as a positive regulator of ERK phosphorylation downstream of fibroblast growth factor-receptor activation. May induce both caspase-dependent apoptosis and caspase-independent cell death. May play a role in the embryonic development. This is Dual serine/threonine and tyrosine protein kinase from Pimephales promelas (Fathead minnow).